The sequence spans 214 residues: Avenin (214 aa).

The first 28 residues, 1–28, serve as a signal peptide directing secretion; it reads MKIFFFLALLALVVSATFAQYAESDGSY. Positions 180–214 are disordered; the sequence is RGQESGVFTPKFTQTSFQPYPEGEDESSLINKASE.

Seed storage protein. The chain is Avenin from Avena sativa (Oat).